The chain runs to 303 residues: Bifunctional protein FolD (303 aa).

NADP(+)-binding positions include 165-167 (GRS), Ser-190, and Ile-231.

The protein belongs to the tetrahydrofolate dehydrogenase/cyclohydrolase family. In terms of assembly, homodimer.

The catalysed reaction is (6R)-5,10-methylene-5,6,7,8-tetrahydrofolate + NADP(+) = (6R)-5,10-methenyltetrahydrofolate + NADPH. The enzyme catalyses (6R)-5,10-methenyltetrahydrofolate + H2O = (6R)-10-formyltetrahydrofolate + H(+). It functions in the pathway one-carbon metabolism; tetrahydrofolate interconversion. Its function is as follows. Catalyzes the oxidation of 5,10-methylenetetrahydrofolate to 5,10-methenyltetrahydrofolate and then the hydrolysis of 5,10-methenyltetrahydrofolate to 10-formyltetrahydrofolate. The chain is Bifunctional protein FolD from Prochlorococcus marinus (strain NATL1A).